The chain runs to 1012 residues: 5'-3' exoribonuclease 2 (1012 aa).

The segment at 264-281 (GKCFLCGQEGHRAADCEG) adopts a CCHC-type zinc-finger fold. Disordered stretches follow at residues 411–439 (VQQR…AQAS), 888–976 (TFKD…QRQV), and 990–1012 (QRKK…PKTA). Over residues 415–433 (QSERFRRDKARDKARDNAR) the composition is skewed to basic and acidic residues. The span at 904-914 (ITPKKMNSPQR) shows a compositional bias: polar residues. 2 stretches are compositionally biased toward basic and acidic residues: residues 918–928 (WKKDETPQSRE) and 950–962 (PQRE…KKEN). Positions 990–1002 (QRKKEKYLRKKAK) are enriched in basic residues.

Belongs to the 5'-3' exonuclease family. XRN2/RAT1 subfamily. As to expression, expressed in roots, leaves, stems and flowers.

Its subcellular location is the nucleus. Functionally, possesses 5'-&gt;3' exoribonuclease activity. Acts as an endogenous post-transcriptional gene silencing (PTGS) suppressor. Degrades miRNA-derived loops, excised during miRNA maturation in the nucleus. Involved in pre-rRNA processing. Involved in the primary exonucleolytic shortening of the 5' external transcribed spacer (5'ETS), required for endonucleolytic processing at site P by the U3 snoRNP complex. Involved with XRN3 in the 5'-end processing of 5.8S and 25S rRNAs. Contributes with XRN3 to polyadenylation-dependent nuclear RNA surveillance. Involved in the degradation of aberrant polyadenylated pre-rRNA through 5'-end processing. The polypeptide is 5'-3' exoribonuclease 2 (Arabidopsis thaliana (Mouse-ear cress)).